We begin with the raw amino-acid sequence, 145 residues long: Arginine repressor (145 aa).

It belongs to the ArgR family.

It localises to the cytoplasm. It functions in the pathway amino-acid biosynthesis; L-arginine biosynthesis [regulation]. Its function is as follows. Regulates arginine biosynthesis genes. The protein is Arginine repressor of Streptococcus pyogenes serotype M3 (strain ATCC BAA-595 / MGAS315).